Here is a 428-residue protein sequence, read N- to C-terminus: Growth/differentiation factor 2 (428 aa).

The signal sequence occupies residues 1–22; it reads MSPGAFRVALLPLFLLVCVTQQ. Positions 23–318 are excised as a propeptide; that stretch reads KPLQNWEQAS…VGPLLARRKR (296 aa). 2 N-linked (GlcNAc...) asparagine glycosylation sites follow: Asn-70 and Asn-135. Cys-155 and Cys-236 form a disulfide bridge. A glycan (N-linked (GlcNAc...) asparagine) is linked at Asn-262. Disulfide bonds link Cys-326–Cys-392, Cys-355–Cys-425, and Cys-359–Cys-427. The tract at residues 401–415 is interaction with ENG; sequence SILYKDDMGVPTLKY.

It belongs to the TGF-beta family. As to quaternary structure, homodimer; disulfide-linked. Detected in extracellular fluid as mature homodimer, and in complex with its propeptide. Interacts with ACVRL1, BMPR2 and ACVR2B with high affinity (in vitro). Identified in a complex with ACVRL1 and ACVR2B. Has ten times lower affinity for ACVR2A (in vitro). Interacts with ENG, forming a heterotetramer with a 2:2 stoichiometry. Can form a heteromeric complex with ENG and ACVRL1. Interacts with type I receptor ACVR1. A reversible disulfide bond can be formed between the two subunits in the homodimer; this has no effect on GDF2 activity.

It localises to the secreted. Functionally, potent circulating inhibitor of angiogenesis. Signals through the type I activin receptor ACVRL1 but not other Alks. Signaling through SMAD1 in endothelial cells requires TGF-beta coreceptor endoglin/ENG. This Mus musculus (Mouse) protein is Growth/differentiation factor 2 (Gdf2).